The chain runs to 149 residues: Aquaporin-like protein 2 (149 aa).

The interval 1 to 35 is disordered; the sequence is MSNESNDLEKNISHLDPTGVDNAYIPPEQPETKHS. The Cytoplasmic portion of the chain corresponds to 1 to 47; the sequence is MSNESNDLEKNISHLDPTGVDNAYIPPEQPETKHSRFNIDRDTLRNH. Residues 48–68 form a helical membrane-spanning segment; sequence FIAAVGEFCGTFMFLWCAYVI. Topologically, residues 69–89 are extracellular; the sequence is CNVANHDVALTTEPEGSHPGQ. Residues 90–110 traverse the membrane as a helical segment; it reads LIMIALGFGFSVMFSIWCFWW. The Cytoplasmic segment spans residues 111–149; the sequence is GFEPSRFSLFVFGQSHLTSQMCSDVVSSDHCWDGCWWCR.

Belongs to the MIP/aquaporin (TC 1.A.8) family.

Its subcellular location is the endoplasmic reticulum membrane. It is found in the cell membrane. Its function is as follows. Water channel required to facilitate the transport of water across membranes. Involved in freeze tolerance, osmotolerance and cell flocculation in liquid cultures. Is non-functional in most laboratory strains. This is Aquaporin-like protein 2 (AQY2-2) from Saccharomyces cerevisiae (strain JAY291) (Baker's yeast).